The primary structure comprises 311 residues: Ribonuclease Z (311 aa).

Positions 61, 63, 65, 66, 139, 210, and 268 each coordinate Zn(2+). The active-site Proton acceptor is the D65.

It belongs to the RNase Z family. As to quaternary structure, homodimer. Zn(2+) serves as cofactor.

The catalysed reaction is Endonucleolytic cleavage of RNA, removing extra 3' nucleotides from tRNA precursor, generating 3' termini of tRNAs. A 3'-hydroxy group is left at the tRNA terminus and a 5'-phosphoryl group is left at the trailer molecule.. In terms of biological role, zinc phosphodiesterase, which displays some tRNA 3'-processing endonuclease activity. Probably involved in tRNA maturation, by removing a 3'-trailer from precursor tRNA. This Haloarcula marismortui (strain ATCC 43049 / DSM 3752 / JCM 8966 / VKM B-1809) (Halobacterium marismortui) protein is Ribonuclease Z.